Here is a 102-residue protein sequence, read N- to C-terminus: Small ribosomal subunit protein uS10 (102 aa).

It belongs to the universal ribosomal protein uS10 family. As to quaternary structure, part of the 30S ribosomal subunit.

Its function is as follows. Involved in the binding of tRNA to the ribosomes. This chain is Small ribosomal subunit protein uS10, found in Rhizobium meliloti (strain 1021) (Ensifer meliloti).